We begin with the raw amino-acid sequence, 91 residues long: Small ribosomal subunit protein uS15 (91 aa).

Belongs to the universal ribosomal protein uS15 family. As to quaternary structure, part of the 30S ribosomal subunit. Forms a bridge to the 50S subunit in the 70S ribosome, contacting the 23S rRNA.

Its function is as follows. One of the primary rRNA binding proteins, it binds directly to 16S rRNA where it helps nucleate assembly of the platform of the 30S subunit by binding and bridging several RNA helices of the 16S rRNA. In terms of biological role, forms an intersubunit bridge (bridge B4) with the 23S rRNA of the 50S subunit in the ribosome. This chain is Small ribosomal subunit protein uS15, found in Rickettsia bellii (strain OSU 85-389).